A 362-amino-acid polypeptide reads, in one-letter code: Aminomethyltransferase (362 aa).

The protein belongs to the GcvT family. The glycine cleavage system is composed of four proteins: P, T, L and H.

It carries out the reaction N(6)-[(R)-S(8)-aminomethyldihydrolipoyl]-L-lysyl-[protein] + (6S)-5,6,7,8-tetrahydrofolate = N(6)-[(R)-dihydrolipoyl]-L-lysyl-[protein] + (6R)-5,10-methylene-5,6,7,8-tetrahydrofolate + NH4(+). Functionally, the glycine cleavage system catalyzes the degradation of glycine. In Listeria monocytogenes serotype 4b (strain CLIP80459), this protein is Aminomethyltransferase.